Consider the following 563-residue polypeptide: Dihydroxy-acid dehydratase (563 aa).

A Mg(2+)-binding site is contributed by Asp79. Cys120 provides a ligand contact to [2Fe-2S] cluster. Residues Asp121 and Lys122 each coordinate Mg(2+). At Lys122 the chain carries N6-carboxylysine. Cys193 contributes to the [2Fe-2S] cluster binding site. Position 451 (Glu451) interacts with Mg(2+). Ser477 serves as the catalytic Proton acceptor.

The protein belongs to the IlvD/Edd family. Homodimer. It depends on [2Fe-2S] cluster as a cofactor. Requires Mg(2+) as cofactor.

It carries out the reaction (2R)-2,3-dihydroxy-3-methylbutanoate = 3-methyl-2-oxobutanoate + H2O. The catalysed reaction is (2R,3R)-2,3-dihydroxy-3-methylpentanoate = (S)-3-methyl-2-oxopentanoate + H2O. It participates in amino-acid biosynthesis; L-isoleucine biosynthesis; L-isoleucine from 2-oxobutanoate: step 3/4. It functions in the pathway amino-acid biosynthesis; L-valine biosynthesis; L-valine from pyruvate: step 3/4. Functionally, functions in the biosynthesis of branched-chain amino acids. Catalyzes the dehydration of (2R,3R)-2,3-dihydroxy-3-methylpentanoate (2,3-dihydroxy-3-methylvalerate) into 2-oxo-3-methylpentanoate (2-oxo-3-methylvalerate) and of (2R)-2,3-dihydroxy-3-methylbutanoate (2,3-dihydroxyisovalerate) into 2-oxo-3-methylbutanoate (2-oxoisovalerate), the penultimate precursor to L-isoleucine and L-valine, respectively. This is Dihydroxy-acid dehydratase from Sulfurovum sp. (strain NBC37-1).